Reading from the N-terminus, the 140-residue chain is Large ribosomal subunit protein uL16 (140 aa).

Belongs to the universal ribosomal protein uL16 family. In terms of assembly, part of the 50S ribosomal subunit.

Binds 23S rRNA and is also seen to make contacts with the A and possibly P site tRNAs. The chain is Large ribosomal subunit protein uL16 from Malacoplasma penetrans (strain HF-2) (Mycoplasma penetrans).